We begin with the raw amino-acid sequence, 374 residues long: Chaperone protein DnaJ (374 aa).

Residues 5 to 70 (DYYEVLGLEK…DKKANYDRFG (66 aa)) form the J domain. Residues 137 to 219 (GVEKSINITR…CHGAGHVRKK (83 aa)) form a CR-type zinc finger. Residues Cys150, Cys153, Cys167, Cys170, Cys193, Cys196, Cys207, and Cys210 each coordinate Zn(2+). CXXCXGXG motif repeat units lie at residues 150-157 (CETCGGTG), 167-174 (CDKCGGTG), 193-200 (CDKCGGRG), and 207-214 (CHECHGAG).

The protein belongs to the DnaJ family. Homodimer. Requires Zn(2+) as cofactor.

It is found in the cytoplasm. Participates actively in the response to hyperosmotic and heat shock by preventing the aggregation of stress-denatured proteins and by disaggregating proteins, also in an autonomous, DnaK-independent fashion. Unfolded proteins bind initially to DnaJ; upon interaction with the DnaJ-bound protein, DnaK hydrolyzes its bound ATP, resulting in the formation of a stable complex. GrpE releases ADP from DnaK; ATP binding to DnaK triggers the release of the substrate protein, thus completing the reaction cycle. Several rounds of ATP-dependent interactions between DnaJ, DnaK and GrpE are required for fully efficient folding. Also involved, together with DnaK and GrpE, in the DNA replication of plasmids through activation of initiation proteins. The protein is Chaperone protein DnaJ of Clostridium acetobutylicum (strain ATCC 824 / DSM 792 / JCM 1419 / IAM 19013 / LMG 5710 / NBRC 13948 / NRRL B-527 / VKM B-1787 / 2291 / W).